Consider the following 615-residue polypeptide: Putative lipase ATG15 (615 aa).

Residues 1–22 (MKQLGEEHPLISTKRPRAKKRR) lie on the Cytoplasmic side of the membrane. A helical; Signal-anchor for type II membrane protein membrane pass occupies residues 23-43 (SIAICAAVLTLIAFGFIRFVP). Residues 44–615 (KDILAGGWYE…NSAAHHVSSI (572 aa)) lie on the Lumenal side of the membrane. Residues Asn253, Asn276, and Asn360 are each glycosylated (N-linked (GlcNAc...) asparagine). The Charge relay system role is filled by Ser378. The segment at 520–559 (NKNDEPPLPNPLHPKPPSTVRSSNMPHEQSPNASRSLSSL) is disordered. A compositionally biased stretch (pro residues) spans 525–536 (PPLPNPLHPKPP). Positions 538-559 (TVRSSNMPHEQSPNASRSLSSL) are enriched in polar residues. The N-linked (GlcNAc...) asparagine glycan is linked to Asn551.

It belongs to the AB hydrolase superfamily. Lipase family. As to quaternary structure, binds to both phosphatidylinositol (PI) and phosphatidylinositol 3,5-bisphosphate (PIP2).

It is found in the endosome. It localises to the multivesicular body membrane. Its subcellular location is the prevacuolar compartment membrane. It carries out the reaction a triacylglycerol + H2O = a diacylglycerol + a fatty acid + H(+). Lipase which is essential for lysis of subvacuolar cytoplasm to vacuole targeted bodies and intravacuolar autophagic bodies. Involved in the lysis of intravacuolar multivesicular body (MVB) vesicles. The intravacuolar membrane disintegration by ATG15 is critical to life span extension. In Debaryomyces hansenii (strain ATCC 36239 / CBS 767 / BCRC 21394 / JCM 1990 / NBRC 0083 / IGC 2968) (Yeast), this protein is Putative lipase ATG15 (ATG15).